Consider the following 271-residue polypeptide: Type II restriction enzyme ScrFI (271 aa).

The enzyme catalyses Endonucleolytic cleavage of DNA to give specific double-stranded fragments with terminal 5'-phosphates.. Its function is as follows. A P subtype restriction enzyme that recognizes the double-stranded sequence 5'-CCNGG-3' and cleaves after C-2. The protein is Type II restriction enzyme ScrFI of Lactococcus lactis subsp. cremoris (Streptococcus cremoris).